Consider the following 256-residue polypeptide: Undecaprenyl-diphosphatase (256 aa).

The next 7 membrane-spanning stretches (helical) occupy residues 1-21 (MDIFHAIILGIVEGLTEFLPV), 41-61 (FHKTFEISIQLGSILAVLALF), 69-89 (VDIWLKLAVAFIPTGALGFLL), 96-116 (LFAPSTVAYALILGGIVFLVL), 172-192 (VAAEFSFLLALPTMFIATGYD), 207-227 (ALGVGFVVAFIFAMIAVKGFL), and 233-253 (FNFVPFGIYRIILGIIFLFYL).

This sequence belongs to the UppP family.

It is found in the cell inner membrane. The catalysed reaction is di-trans,octa-cis-undecaprenyl diphosphate + H2O = di-trans,octa-cis-undecaprenyl phosphate + phosphate + H(+). In terms of biological role, catalyzes the dephosphorylation of undecaprenyl diphosphate (UPP). Confers resistance to bacitracin. In Wolinella succinogenes (strain ATCC 29543 / DSM 1740 / CCUG 13145 / JCM 31913 / LMG 7466 / NCTC 11488 / FDC 602W) (Vibrio succinogenes), this protein is Undecaprenyl-diphosphatase.